We begin with the raw amino-acid sequence, 102 residues long: Large ribosomal subunit protein uL24 (102 aa).

It belongs to the universal ribosomal protein uL24 family. Part of the 50S ribosomal subunit.

One of two assembly initiator proteins, it binds directly to the 5'-end of the 23S rRNA, where it nucleates assembly of the 50S subunit. In terms of biological role, one of the proteins that surrounds the polypeptide exit tunnel on the outside of the subunit. The sequence is that of Large ribosomal subunit protein uL24 from Limosilactobacillus reuteri (strain DSM 20016) (Lactobacillus reuteri).